Reading from the N-terminus, the 496-residue chain is Isocitrate dehydrogenase [NADP] (496 aa).

The NADP(+) site is built by leucine 88 and threonine 90. Residues serine 98, asparagine 100, arginine 104, arginine 114, and arginine 137 each coordinate D-threo-isocitrate. NADP(+) contacts are provided by asparagine 193, glutamine 229, and lysine 232. Aspartate 248 serves as a coordination point for Mg(2+). Residues glutamate 277, glycine 281, serine 282, alanine 283, lysine 285, tyrosine 286, and asparagine 293 each contribute to the NADP(+) site.

Belongs to the isocitrate and isopropylmalate dehydrogenases family. Homodimer. It depends on Mg(2+) as a cofactor. Requires Mn(2+) as cofactor.

It catalyses the reaction D-threo-isocitrate + NADP(+) = 2-oxoglutarate + CO2 + NADPH. Functionally, catalyzes the oxidative decarboxylation of isocitrate to 2-oxoglutarate and carbon dioxide with the concomitant reduction of NADP(+). The protein is Isocitrate dehydrogenase [NADP] (icd) of Thermus thermophilus (strain ATCC 27634 / DSM 579 / HB8).